The chain runs to 176 residues: Large ribosomal subunit protein uL10 (176 aa).

This sequence belongs to the universal ribosomal protein uL10 family. Part of the ribosomal stalk of the 50S ribosomal subunit. The N-terminus interacts with L11 and the large rRNA to form the base of the stalk. The C-terminus forms an elongated spine to which L12 dimers bind in a sequential fashion forming a multimeric L10(L12)X complex.

In terms of biological role, forms part of the ribosomal stalk, playing a central role in the interaction of the ribosome with GTP-bound translation factors. The polypeptide is Large ribosomal subunit protein uL10 (Marinobacter nauticus (strain ATCC 700491 / DSM 11845 / VT8) (Marinobacter aquaeolei)).